The sequence spans 397 residues: 3-hydroxybenzoate 6-hydroxylase (397 aa).

Belongs to the 3-hydroxybenzoate 6-hydroxylase family. Monomer. FAD is required as a cofactor.

It catalyses the reaction 3-hydroxybenzoate + NADH + O2 + H(+) = 2,5-dihydroxybenzoate + NAD(+) + H2O. Its activity is regulated as follows. Inhibited by copper, mercury and iron ions. Catalyzes the NAD- or NADP-dependent conversion of 3-hydroxybenzoate to gentisate. NAD and NADP function equally well. The protein is 3-hydroxybenzoate 6-hydroxylase (mhbM) of Klebsiella oxytoca.